The primary structure comprises 465 residues: ATP synthase subunit beta (465 aa).

148–155 contributes to the ATP binding site; sequence GGAGVGKT.

The protein belongs to the ATPase alpha/beta chains family. In terms of assembly, F-type ATPases have 2 components, CF(1) - the catalytic core - and CF(0) - the membrane proton channel. CF(1) has five subunits: alpha(3), beta(3), gamma(1), delta(1), epsilon(1). CF(0) has three main subunits: a(1), b(2) and c(9-12). The alpha and beta chains form an alternating ring which encloses part of the gamma chain. CF(1) is attached to CF(0) by a central stalk formed by the gamma and epsilon chains, while a peripheral stalk is formed by the delta and b chains.

It is found in the cell inner membrane. It catalyses the reaction ATP + H2O + 4 H(+)(in) = ADP + phosphate + 5 H(+)(out). Produces ATP from ADP in the presence of a proton gradient across the membrane. The catalytic sites are hosted primarily by the beta subunits. The sequence is that of ATP synthase subunit beta from Neisseria meningitidis serogroup A / serotype 4A (strain DSM 15465 / Z2491).